The primary structure comprises 210 residues: Large ribosomal subunit protein uL3 (210 aa).

This sequence belongs to the universal ribosomal protein uL3 family. Part of the 50S ribosomal subunit. Forms a cluster with proteins L14 and L19.

In terms of biological role, one of the primary rRNA binding proteins, it binds directly near the 3'-end of the 23S rRNA, where it nucleates assembly of the 50S subunit. This chain is Large ribosomal subunit protein uL3, found in Geobacter metallireducens (strain ATCC 53774 / DSM 7210 / GS-15).